Here is a 1006-residue protein sequence, read N- to C-terminus: Probable sulfite reductase [NADPH] flavoprotein component (1006 aa).

The FAD-binding FR-type domain maps to 622–852 (EKVFTVHVRA…AVKTSVMKLP (231 aa)). FAD is bound by residues 658-669 (YDIGEALGVYGV) and 788-798 (IKRREYSISSS).

The cofactor is FAD. FMN serves as cofactor.

It catalyses the reaction hydrogen sulfide + 3 NADP(+) + 3 H2O = sulfite + 3 NADPH + 4 H(+). It participates in sulfur metabolism; hydrogen sulfide biosynthesis; hydrogen sulfide from sulfite (NADPH route): step 1/1. In terms of biological role, this enzyme catalyzes the 6-electron reduction of sulfite to sulfide. This is one of several activities required for the biosynthesis of L-cysteine from sulfate. This Schizosaccharomyces pombe (strain 972 / ATCC 24843) (Fission yeast) protein is Probable sulfite reductase [NADPH] flavoprotein component.